Here is a 379-residue protein sequence, read N- to C-terminus: uncharacterized protein (379 aa).

Residues 7–27 (VYIFAGIFLFIALIILIKIFF) form a helical membrane-spanning segment.

The protein localises to the membrane. This is an uncharacterized protein from Caenorhabditis elegans.